Here is a 495-residue protein sequence, read N- to C-terminus: UDP-N-acetylmuramoyl-L-alanyl-D-glutamate--2,6-diaminopimelate ligase (495 aa).

Residues leucine 27, serine 29, and 44–46 (HQA) contribute to the UDP-N-acetyl-alpha-D-muramoyl-L-alanyl-D-glutamate site. An ATP-binding site is contributed by 116 to 122 (GTNGKTT). UDP-N-acetyl-alpha-D-muramoyl-L-alanyl-D-glutamate-binding positions include asparagine 157, 158–159 (TT), serine 185, glutamine 191, and arginine 193. Lysine 225 is modified (N6-carboxylysine). Residues arginine 390, 414 to 417 (DNPR), glycine 465, and glutamate 469 each bind meso-2,6-diaminopimelate. The Meso-diaminopimelate recognition motif signature appears at 414-417 (DNPR).

Belongs to the MurCDEF family. MurE subfamily. It depends on Mg(2+) as a cofactor. Post-translationally, carboxylation is probably crucial for Mg(2+) binding and, consequently, for the gamma-phosphate positioning of ATP.

It localises to the cytoplasm. The enzyme catalyses UDP-N-acetyl-alpha-D-muramoyl-L-alanyl-D-glutamate + meso-2,6-diaminopimelate + ATP = UDP-N-acetyl-alpha-D-muramoyl-L-alanyl-gamma-D-glutamyl-meso-2,6-diaminopimelate + ADP + phosphate + H(+). The protein operates within cell wall biogenesis; peptidoglycan biosynthesis. Its function is as follows. Catalyzes the addition of meso-diaminopimelic acid to the nucleotide precursor UDP-N-acetylmuramoyl-L-alanyl-D-glutamate (UMAG) in the biosynthesis of bacterial cell-wall peptidoglycan. This is UDP-N-acetylmuramoyl-L-alanyl-D-glutamate--2,6-diaminopimelate ligase from Salmonella paratyphi A (strain ATCC 9150 / SARB42).